Consider the following 130-residue polypeptide: Methylglyoxal synthase (130 aa).

In terms of domain architecture, MGS-like spans 1 to 130 (MSKPRIALIA…DLARNMQDVC (130 aa)). Substrate is bound by residues histidine 11, lysine 15, 37–40 (TGTT), and 57–58 (SG). The Proton donor/acceptor role is filled by aspartate 63. Residue histidine 90 coordinates substrate.

The protein belongs to the methylglyoxal synthase family.

It carries out the reaction dihydroxyacetone phosphate = methylglyoxal + phosphate. In terms of biological role, catalyzes the formation of methylglyoxal from dihydroxyacetone phosphate. The protein is Methylglyoxal synthase of Burkholderia ambifaria (strain MC40-6).